The chain runs to 782 residues: Vacuolar import and degradation protein 27 (782 aa).

A phosphoserine mark is found at serine 170, serine 195, and serine 196. Acidic residues predominate over residues 188–200; that stretch reads DDDDELDSSSDDF. The interval 188 to 215 is disordered; sequence DDDDELDSSSDDFQDAKDTSFEHEKESE. Basic and acidic residues predominate over residues 201–215; that stretch reads QDAKDTSFEHEKESE. Serine 222 carries the post-translational modification Phosphoserine. A compositionally biased stretch (basic and acidic residues) spans 372-384; the sequence is DDRSNEERDKESS. Residues 372–422 are disordered; sequence DDRSNEERDKESSESENDSEDEDDENDHSKRIISSEAFEEPRRATSKGNSS. Acidic residues predominate over residues 385–397; the sequence is ESENDSEDEDDEN. Threonine 486 carries the phosphothreonine modification.

The protein belongs to the VID27 family.

It localises to the cytoplasm. In terms of biological role, has a role in the negative regulation of gluconeogenesis. Required for vacuolar catabolite degradation of fructose-1,6-bisphosphatase (FBPase). This chain is Vacuolar import and degradation protein 27 (VID27), found in Saccharomyces cerevisiae (strain ATCC 204508 / S288c) (Baker's yeast).